The chain runs to 108 residues: Thiosulfate sulfurtransferase GlpE (108 aa).

The 89-residue stretch at His17–Ala105 folds into the Rhodanese domain. The active-site Cysteine persulfide intermediate is the Cys65.

It belongs to the GlpE family.

The protein localises to the cytoplasm. The catalysed reaction is thiosulfate + hydrogen cyanide = thiocyanate + sulfite + 2 H(+). The enzyme catalyses thiosulfate + [thioredoxin]-dithiol = [thioredoxin]-disulfide + hydrogen sulfide + sulfite + 2 H(+). Transferase that catalyzes the transfer of sulfur from thiosulfate to thiophilic acceptors such as cyanide or dithiols. May function in a CysM-independent thiosulfate assimilation pathway by catalyzing the conversion of thiosulfate to sulfite, which can then be used for L-cysteine biosynthesis. This Salmonella arizonae (strain ATCC BAA-731 / CDC346-86 / RSK2980) protein is Thiosulfate sulfurtransferase GlpE.